Reading from the N-terminus, the 172-residue chain is 3-hydroxydecanoyl-[acyl-carrier-protein] dehydratase (172 aa).

Residue His71 is part of the active site.

It belongs to the thioester dehydratase family. FabA subfamily. In terms of assembly, homodimer.

It is found in the cytoplasm. The enzyme catalyses a (3R)-hydroxyacyl-[ACP] = a (2E)-enoyl-[ACP] + H2O. The catalysed reaction is (3R)-hydroxydecanoyl-[ACP] = (2E)-decenoyl-[ACP] + H2O. It carries out the reaction (2E)-decenoyl-[ACP] = (3Z)-decenoyl-[ACP]. It functions in the pathway lipid metabolism; fatty acid biosynthesis. In terms of biological role, necessary for the introduction of cis unsaturation into fatty acids. Catalyzes the dehydration of (3R)-3-hydroxydecanoyl-ACP to E-(2)-decenoyl-ACP and then its isomerization to Z-(3)-decenoyl-ACP. Can catalyze the dehydratase reaction for beta-hydroxyacyl-ACPs with saturated chain lengths up to 16:0, being most active on intermediate chain length. The protein is 3-hydroxydecanoyl-[acyl-carrier-protein] dehydratase of Vibrio cholerae serotype O1 (strain ATCC 39541 / Classical Ogawa 395 / O395).